We begin with the raw amino-acid sequence, 314 residues long: tRNA dimethylallyltransferase (314 aa).

12-19 (GPTASGKT) provides a ligand contact to ATP. A substrate-binding site is contributed by 14-19 (TASGKT). Interaction with substrate tRNA regions lie at residues 37-40 (DSAL), 161-165 (QRIQR), and 244-249 (RCVGYR).

This sequence belongs to the IPP transferase family. As to quaternary structure, monomer. Mg(2+) serves as cofactor.

The catalysed reaction is adenosine(37) in tRNA + dimethylallyl diphosphate = N(6)-dimethylallyladenosine(37) in tRNA + diphosphate. In terms of biological role, catalyzes the transfer of a dimethylallyl group onto the adenine at position 37 in tRNAs that read codons beginning with uridine, leading to the formation of N6-(dimethylallyl)adenosine (i(6)A). In Janthinobacterium sp. (strain Marseille) (Minibacterium massiliensis), this protein is tRNA dimethylallyltransferase.